A 295-amino-acid polypeptide reads, in one-letter code: Protoheme IX farnesyltransferase (295 aa).

Transmembrane regions (helical) follow at residues 8–28 (VTKPGIIFGNLISVIGGFLLA), 35–55 (YPLFLFTLVGVSLVVASGCVF), 74–94 (VLVKGLISPKMSLVYATLLGI), 106–125 (PLAMWLAVMGFVVYVGVYSL), 132–152 (VYGTLIGSLSGAAPPVIGYCA), 162–182 (LILLAIFSLWQMPHSYAIAIF), 208–228 (ITLYIIAFAVATLMLSLGGYA), 233–253 (LVVAAAVSVWWLGMALRGYKA), and 264–284 (FVFSIVAITSLSVMMSVDFMV).

Belongs to the UbiA prenyltransferase family. Protoheme IX farnesyltransferase subfamily.

Its subcellular location is the cell inner membrane. It carries out the reaction heme b + (2E,6E)-farnesyl diphosphate + H2O = Fe(II)-heme o + diphosphate. Its pathway is porphyrin-containing compound metabolism; heme O biosynthesis; heme O from protoheme: step 1/1. Functionally, converts heme B (protoheme IX) to heme O by substitution of the vinyl group on carbon 2 of heme B porphyrin ring with a hydroxyethyl farnesyl side group. The polypeptide is Protoheme IX farnesyltransferase (Cronobacter sakazakii (strain ATCC BAA-894) (Enterobacter sakazakii)).